Reading from the N-terminus, the 412-residue chain is Dihydrolipoyllysine-residue acetyltransferase component of pyruvate dehydrogenase complex (412 aa).

The Lipoyl-binding domain maps to 2–78 (PIKILMPVLS…PVNSLIAVLS (77 aa)). K43 carries the N6-lipoyllysine modification. Positions 132–169 (FASPLAKRLAKMGNIRLESVKGSGPHGRIVKQDILSYT) constitute a Peripheral subunit-binding (PSBD) domain. H385 is a catalytic residue.

This sequence belongs to the 2-oxoacid dehydrogenase family. Forms a 24-polypeptide structural core with octahedral symmetry. Requires (R)-lipoate as cofactor.

The catalysed reaction is N(6)-[(R)-dihydrolipoyl]-L-lysyl-[protein] + acetyl-CoA = N(6)-[(R)-S(8)-acetyldihydrolipoyl]-L-lysyl-[protein] + CoA. Its function is as follows. The pyruvate dehydrogenase complex catalyzes the overall conversion of pyruvate to acetyl-CoA and CO(2). It contains multiple copies of three enzymatic components: pyruvate dehydrogenase (E1), dihydrolipoamide acetyltransferase (E2) and lipoamide dehydrogenase (E3). The sequence is that of Dihydrolipoyllysine-residue acetyltransferase component of pyruvate dehydrogenase complex (pdhC) from Rickettsia felis (strain ATCC VR-1525 / URRWXCal2) (Rickettsia azadi).